A 173-amino-acid chain; its full sequence is Large ribosomal subunit protein uL10 (173 aa).

Belongs to the universal ribosomal protein uL10 family. Part of the ribosomal stalk of the 50S ribosomal subunit. The N-terminus interacts with L11 and the large rRNA to form the base of the stalk. The C-terminus forms an elongated spine to which L12 dimers bind in a sequential fashion forming a multimeric L10(L12)X complex.

Functionally, forms part of the ribosomal stalk, playing a central role in the interaction of the ribosome with GTP-bound translation factors. The protein is Large ribosomal subunit protein uL10 of Cupriavidus pinatubonensis (strain JMP 134 / LMG 1197) (Cupriavidus necator (strain JMP 134)).